Reading from the N-terminus, the 404-residue chain is MERVPNEHGRFGDFGGKFVPETLMLPLEEIEAELDKALADESFKQEYIRILQHYSGRPTPLTFAPNLTRQLGGAKMYLKREDLNHTGAHKINNAIGQALLAKRMGKKKLIAETGAGQHGVAAATVAAHFGMDCIVFMGEEDIKRQELNVFRMKLLGAEVVPVSSGNRTLKDATNEAIRYWVAHCDDHFYMIGSVVGPHPYPKMVREFQRIIGDEAKEQFLACEGKLPDVIVACVGGGSNAIGMFYPFLQDDVRLVGVEAAGKGIDTPYHAATITKGTKGVIHGAMTYLLQDEYGQIVEPYSISAGLDYPGVGPEHAYLASIGRVRYESVTDEEAVAAFRLLAQTEGIIPAIESAHAVAKAVELAQSMSPDETVLICLSGRGDKDVQTMMRHLGAKEGEDVAAIR.

At K90 the chain carries N6-(pyridoxal phosphate)lysine.

This sequence belongs to the TrpB family. Tetramer of two alpha and two beta chains. Pyridoxal 5'-phosphate serves as cofactor.

The enzyme catalyses (1S,2R)-1-C-(indol-3-yl)glycerol 3-phosphate + L-serine = D-glyceraldehyde 3-phosphate + L-tryptophan + H2O. It functions in the pathway amino-acid biosynthesis; L-tryptophan biosynthesis; L-tryptophan from chorismate: step 5/5. In terms of biological role, the beta subunit is responsible for the synthesis of L-tryptophan from indole and L-serine. The sequence is that of Tryptophan synthase beta chain (trpB) from Geobacillus stearothermophilus (Bacillus stearothermophilus).